The following is a 123-amino-acid chain: Small ribosomal subunit protein uS12cz/uS12cy (123 aa).

The protein belongs to the universal ribosomal protein uS12 family. Part of the 30S ribosomal subunit.

It localises to the plastid. It is found in the chloroplast. In terms of biological role, with S4 and S5 plays an important role in translational accuracy. Located at the interface of the 30S and 50S subunits. In Nandina domestica (Heavenly bamboo), this protein is Small ribosomal subunit protein uS12cz/uS12cy (rps12-A).